Consider the following 145-residue polypeptide: Large ribosomal subunit protein uL11 (145 aa).

Belongs to the universal ribosomal protein uL11 family. As to quaternary structure, part of the ribosomal stalk of the 50S ribosomal subunit. Interacts with L10 and the large rRNA to form the base of the stalk. L10 forms an elongated spine to which L12 dimers bind in a sequential fashion forming a multimeric L10(L12)X complex. One or more lysine residues are methylated.

Functionally, forms part of the ribosomal stalk which helps the ribosome interact with GTP-bound translation factors. This is Large ribosomal subunit protein uL11 from Rickettsia prowazekii (strain Madrid E).